A 117-amino-acid polypeptide reads, in one-letter code: Large ribosomal subunit protein bL20 (117 aa).

This sequence belongs to the bacterial ribosomal protein bL20 family.

Binds directly to 23S ribosomal RNA and is necessary for the in vitro assembly process of the 50S ribosomal subunit. It is not involved in the protein synthesizing functions of that subunit. The protein is Large ribosomal subunit protein bL20 of Chromohalobacter salexigens (strain ATCC BAA-138 / DSM 3043 / CIP 106854 / NCIMB 13768 / 1H11).